The primary structure comprises 184 residues: MIEHNPTTIYGTTIVTVRKDGKVVIAGDGQVSLGNTVMKGNARKVRRIGKGNVIAGFAGTTADAFTLLERLEAKLEQYPDQLMRASVELAKDWRTDRYLRKLEAMMLVADSKVTLALTGTGDVLEPEQGVMAIGSGGNYALAAARALIETDKSAEEIARKAMNIAADICIYTNHNIIVESLDAQ.

The active site involves Thr12. 3 residues coordinate Na(+): Ala166, Cys169, and Thr172.

It belongs to the peptidase T1B family. HslV subfamily. In terms of assembly, a double ring-shaped homohexamer of HslV is capped on each side by a ring-shaped HslU homohexamer. The assembly of the HslU/HslV complex is dependent on binding of ATP.

It localises to the cytoplasm. It carries out the reaction ATP-dependent cleavage of peptide bonds with broad specificity.. With respect to regulation, allosterically activated by HslU binding. In terms of biological role, protease subunit of a proteasome-like degradation complex believed to be a general protein degrading machinery. This Brucella abortus (strain S19) protein is ATP-dependent protease subunit HslV.